A 131-amino-acid chain; its full sequence is Sec-independent protein translocase protein TatB (131 aa).

Residues 2 to 22 (FANIGWGEMLVLVMVGLVVLG) traverse the membrane as a helical segment. A disordered region spans residues 90–131 (DSLFTGDFDRPTPKKPDAAGSAGPDATEQIGAGPIPFDSDAT). Basic and acidic residues predominate over residues 96-106 (DFDRPTPKKPD).

Belongs to the TatB family. The Tat system comprises two distinct complexes: a TatABC complex, containing multiple copies of TatA, TatB and TatC subunits, and a separate TatA complex, containing only TatA subunits. Substrates initially bind to the TatABC complex, which probably triggers association of the separate TatA complex to form the active translocon.

The protein resides in the cell membrane. Its function is as follows. Part of the twin-arginine translocation (Tat) system that transports large folded proteins containing a characteristic twin-arginine motif in their signal peptide across membranes. Together with TatC, TatB is part of a receptor directly interacting with Tat signal peptides. TatB may form an oligomeric binding site that transiently accommodates folded Tat precursor proteins before their translocation. This Mycobacterium bovis (strain ATCC BAA-935 / AF2122/97) protein is Sec-independent protein translocase protein TatB.